Reading from the N-terminus, the 396-residue chain is Calcium-responsive transactivator (396 aa).

The N-terminal auto-inhibitory domain; necessary for interaction with SMARCA4/BRG1 stretch occupies residues 1 to 148 (MSVAFASARP…TLPTTSMSIS (148 aa)). Positions 50–53 (YQQI) match the SH2-binding motif. 3 disordered regions span residues 72-162 (QSLL…SQGV), 192-280 (QAAT…GDYA), and 311-396 (SQQQ…NYQQ). Over residues 90–106 (LTQSGSSQGLHSQGSLS) the composition is skewed to low complexity. Composition is skewed to polar residues over residues 107–122 (DAISTGLPPSSLLQGQ) and 128–147 (SHVSMQQTAPNTLPTTSMSI). Residues 149–232 (GPGYSHAGPA…GSSMMGQRPM (84 aa)) are methionine-rich intra-molecular domain. 3 stretches are compositionally biased toward low complexity: residues 199–229 (SSAQGGSQHYQGQSSIAMMGQGSQGSSMMGQ), 238–261 (SQQGSSQQYLGQEEYYGEQYSHSQ), and 311–369 (SQQQ…YGSY). Positions 246 to 317 (YLGQEEYYGE…SQYSQQQAGY (72 aa)) are MFD domain. Residues 334–396 (SQQSYPGQQQ…EQGQYGNYQQ (63 aa)) form a necessary for nuclear localization region. Residues 353 to 356 (SQYP) carry the SH2-binding motif. Positions 371 to 379 (APQTAPSAQ) match the SH3-binding motif. Positions 384 to 396 (YGYEQGQYGNYQQ) are enriched in low complexity. A necessary for interaction with CREBBP and for the recruitment of CREBBP to the nuclear bodies region spans residues 387–396 (EQGQYGNYQQ). The SH2-binding signature appears at 391–394 (YGNY).

The protein belongs to the SS18 family. As to quaternary structure, homodimer. Dimerization may be necessary for its function in neuronal dendritic development. Interacts (via C-terminus) with CREBBP (via N-terminus), EP300 and SMARCA4/BRG1. Interacts with the nBAF complex. Association with CREBBP facilitates transcription while the association with SMARCA4/BRG1 suppresses CREST-mediated transcription in resting neurons. As to expression, ubiquitous; with lowest levels in spleen.

It is found in the nucleus. The protein resides in the chromosome. It localises to the centromere. The protein localises to the kinetochore. Functionally, transcriptional activator which is required for calcium-dependent dendritic growth and branching in cortical neurons. Recruits CREB-binding protein (CREBBP) to nuclear bodies. Component of the CREST-BRG1 complex, a multiprotein complex that regulates promoter activation by orchestrating a calcium-dependent release of a repressor complex and a recruitment of an activator complex. In resting neurons, transcription of the c-FOS promoter is inhibited by BRG1-dependent recruitment of a phospho-RB1-HDAC1 repressor complex. Upon calcium influx, RB1 is dephosphorylated by calcineurin, which leads to release of the repressor complex. At the same time, there is increased recruitment of CREBBP to the promoter by a CREST-dependent mechanism, which leads to transcriptional activation. The CREST-BRG1 complex also binds to the NR2B promoter, and activity-dependent induction of NR2B expression involves a release of HDAC1 and recruitment of CREBBP. This is Calcium-responsive transactivator (SS18L1) from Homo sapiens (Human).